A 149-amino-acid polypeptide reads, in one-letter code: Aquaporin-like protein 2 (149 aa).

The segment at 1-35 is disordered; the sequence is MSNESNDLEKNISHLDPTGVDNAYIPPEQPETKHS. Residues 1–47 are Cytoplasmic-facing; sequence MSNESNDLEKNISHLDPTGVDNAYIPPEQPETKHSRFNIDRDTLRNH. A helical membrane pass occupies residues 48–68; the sequence is FIAAVGEFCGTFMFLWCAYVI. Topologically, residues 69–89 are extracellular; the sequence is CNVANHDVALTTEPEGSHPGQ. The helical transmembrane segment at 90-110 threads the bilayer; sequence LIMIALGFGFSVMFSIWCFWW. The Cytoplasmic portion of the chain corresponds to 111 to 149; that stretch reads GFEPSRFSLFVFGQSHLTSQMCSDVVSSDHCWDGCWWCR.

It belongs to the MIP/aquaporin (TC 1.A.8) family.

Its subcellular location is the endoplasmic reticulum membrane. It localises to the cell membrane. Water channel required to facilitate the transport of water across membranes. Involved in freeze tolerance, osmotolerance and cell flocculation in liquid cultures. Is non-functional in most laboratory strains. The sequence is that of Aquaporin-like protein 2 (AQY2-2) from Saccharomyces cerevisiae (strain JAY291) (Baker's yeast).